The following is a 434-amino-acid chain: UPF0597 protein CLB_1949 (434 aa).

The protein belongs to the UPF0597 family.

The polypeptide is UPF0597 protein CLB_1949 (Clostridium botulinum (strain ATCC 19397 / Type A)).